Reading from the N-terminus, the 313-residue chain is Transaldolase (313 aa).

Catalysis depends on K125, which acts as the Schiff-base intermediate with substrate.

It belongs to the transaldolase family. Type 1 subfamily. As to quaternary structure, homodimer.

The protein localises to the cytoplasm. The enzyme catalyses D-sedoheptulose 7-phosphate + D-glyceraldehyde 3-phosphate = D-erythrose 4-phosphate + beta-D-fructose 6-phosphate. Its pathway is carbohydrate degradation; pentose phosphate pathway; D-glyceraldehyde 3-phosphate and beta-D-fructose 6-phosphate from D-ribose 5-phosphate and D-xylulose 5-phosphate (non-oxidative stage): step 2/3. Transaldolase is important for the balance of metabolites in the pentose-phosphate pathway. The polypeptide is Transaldolase (Pseudomonas syringae pv. syringae (strain B728a)).